The primary structure comprises 791 residues: KN motif and ankyrin repeat domain-containing protein 3 (791 aa).

Disordered stretches follow at residues 1–37 (MAKF…SVET), 56–181 (RGPA…GPAQ), 254–312 (ATSD…ETRE), 401–425 (GCTE…GDEM), and 463–514 (YESS…GDCE). Residues 25–34 (SARSPSSPYS) show a composition bias toward polar residues. Residues 105–125 (LSPGAFPGLSLPPLSPRSLSR) show a composition bias toward low complexity. A compositionally biased stretch (basic and acidic residues) spans 127–149 (PRVEHTLLETSRRLEQAQARERA). A phosphoserine mark is found at Ser-151, Ser-159, Ser-163, Ser-166, Ser-167, and Ser-176. The segment covering 158–180 (RSPRGSGRSSPAPNPALASPGPA) has biased composition (low complexity). Positions 180–229 (AQLQLVREQMAAALRRLRELEDQARALPELQEQVRALRAEKARLLAGRVQ) form a coiled coil. 2 stretches are compositionally biased toward basic and acidic residues: residues 254–280 (ATSD…RRSE) and 293–312 (PDGE…ETRE). Position 279 is a phosphoserine (Ser-279). Polar residues predominate over residues 401–410 (GCTEKTTQTE). The span at 485 to 496 (SSSSGSDDSSGG) shows a compositional bias: low complexity. Basic and acidic residues predominate over residues 505-514 (HNDKDAGDCE). 5 ANK repeats span residues 606–636 (NGNT…DVNH), 640–677 (AGYS…AKAS), 679–708 (TGQT…DVNV), 712–742 (DGAT…DLTI), and 746–775 (EGTS…SNHQ). The span at 772 to 783 (SNHQGQSSTGSP) shows a compositional bias: polar residues. The disordered stretch occupies residues 772-791 (SNHQGQSSTGSPTAKECNDK).

Functionally, may be involved in the control of cytoskeleton formation by regulating actin polymerization. The sequence is that of KN motif and ankyrin repeat domain-containing protein 3 from Mus musculus (Mouse).